The sequence spans 149 residues: Large ribosomal subunit protein uL15 (149 aa).

A disordered region spans residues 1-53 (MRLHTLQPAPGAKSTRKRVGRGTSSGHGKTSGFGHKGQKARSGRVGKRGFEGG). Residues 23 to 35 (TSSGHGKTSGFGH) show a composition bias toward gly residues. The span at 36–47 (KGQKARSGRVGK) shows a compositional bias: basic residues.

The protein belongs to the universal ribosomal protein uL15 family. Part of the 50S ribosomal subunit.

Binds to the 23S rRNA. The polypeptide is Large ribosomal subunit protein uL15 (Coprothermobacter proteolyticus (strain ATCC 35245 / DSM 5265 / OCM 4 / BT)).